The primary structure comprises 572 residues: Sulfite reductase [NADPH] hemoprotein beta-component (572 aa).

Positions 436, 442, 481, and 485 each coordinate [4Fe-4S] cluster. C485 is a binding site for siroheme.

This sequence belongs to the nitrite and sulfite reductase 4Fe-4S domain family. In terms of assembly, alpha(8)-beta(8). The alpha component is a flavoprotein, the beta component is a hemoprotein. Siroheme is required as a cofactor. The cofactor is [4Fe-4S] cluster.

The enzyme catalyses hydrogen sulfide + 3 NADP(+) + 3 H2O = sulfite + 3 NADPH + 4 H(+). It participates in sulfur metabolism; hydrogen sulfide biosynthesis; hydrogen sulfide from sulfite (NADPH route): step 1/1. Its function is as follows. Component of the sulfite reductase complex that catalyzes the 6-electron reduction of sulfite to sulfide. This is one of several activities required for the biosynthesis of L-cysteine from sulfate. This Bacillus pumilus (strain SAFR-032) protein is Sulfite reductase [NADPH] hemoprotein beta-component.